Consider the following 263-residue polypeptide: uncharacterized protein (263 aa).

31-38 (GPTGSGKT) is a binding site for ATP.

Belongs to the CbbQ/NirQ/NorQ/GpvN family.

This is an uncharacterized protein from Staphylococcus epidermidis (strain ATCC 35984 / DSM 28319 / BCRC 17069 / CCUG 31568 / BM 3577 / RP62A).